We begin with the raw amino-acid sequence, 75 residues long: Mating pheromone Er-1/Er-3 (75 aa).

Positions 1–19 (MNKLAILAIIAMVLFSANA) are cleaved as a signal peptide. Residues 20–35 (FRFQSRLRSNVEAKTG) constitute a propeptide that is removed on maturation. 3 disulfides stabilise this stretch: Cys-38/Cys-54, Cys-45/Cys-71, and Cys-50/Cys-63.

In terms of assembly, homodimer.

Its subcellular location is the secreted. It localises to the cell membrane. Functionally, mating ciliate pheromones (or gamones) are diffusible extracellular communication signals that distinguish different intraspecific classes of cells commonly referred to as 'mating types'. They prepare the latter for conjugation by changing their cell surface properties. The membrane-bound form promotes inter-cellular communication and adhesion for mating pair formation and may act as binding site for the secreted form. In Euplotes raikovi, this protein is Mating pheromone Er-1/Er-3 (MAT1).